Reading from the N-terminus, the 467-residue chain is Tyrosine phenol-lyase (467 aa).

K268 is subject to N6-(pyridoxal phosphate)lysine.

Belongs to the beta-eliminating lyase family. Homotetramer. Pyridoxal 5'-phosphate serves as cofactor.

The enzyme catalyses L-tyrosine + H2O = phenol + pyruvate + NH4(+). This chain is Tyrosine phenol-lyase, found in Nostoc punctiforme (strain ATCC 29133 / PCC 73102).